We begin with the raw amino-acid sequence, 78 residues long: ATP synthase subunit a (78 aa).

3 helical membrane-spanning segments follow: residues 13 to 33 (LFGN…LGTS), 35 to 55 (FLGA…GMFI), and 57 to 77 (SLQA…KVEA).

It belongs to the ATPase A chain family. F-type ATPases have 2 components, CF(1) - the catalytic core - and CF(0) - the membrane proton channel. CF(1) has five subunits: alpha(3), beta(3), gamma(1), delta(1), epsilon(1). CF(0) has three main subunits: a(1), b(2) and c(9-12). The alpha and beta chains form an alternating ring which encloses part of the gamma chain. CF(1) is attached to CF(0) by a central stalk formed by the gamma and epsilon chains, while a peripheral stalk is formed by the delta and b chains.

Its subcellular location is the cell membrane. Functionally, key component of the proton channel; it plays a direct role in the translocation of protons across the membrane. This Alkalihalobacillus alcalophilus (Bacillus alcalophilus) protein is ATP synthase subunit a (atpB).